The chain runs to 438 residues: EF-hand calcium-binding domain-containing protein 3 (438 aa).

EF-hand domains lie at 47-82 (SQMA…LGMN) and 83-118 (LTKH…KNLF). Residues aspartate 96, aspartate 98, aspartate 100, lysine 102, and aspartate 107 each coordinate Ca(2+). Phosphotyrosine is present on tyrosine 279. A compositionally biased stretch (low complexity) spans 405–415 (SSHNSRSSSSS). Residues 405–438 (SSHNSRSSSSSDTSECYTDSGRKRKRKGLKGFQQ) form a disordered region. The segment covering 426-438 (RKRKRKGLKGFQQ) has biased composition (basic residues).

The sequence is that of EF-hand calcium-binding domain-containing protein 3 (EFCAB3) from Homo sapiens (Human).